The primary structure comprises 437 residues: Cobyrinate a,c-diamide synthase (437 aa).

Residues 243–433 (IAAIAYDSAF…SHFHFSSARG (191 aa)) form the GATase cobBQ-type domain. Cys324 acts as the Nucleophile in catalysis.

Belongs to the CobB/CbiA family. Requires Mg(2+) as cofactor.

The catalysed reaction is cob(II)yrinate + 2 L-glutamine + 2 ATP + 2 H2O = cob(II)yrinate a,c diamide + 2 L-glutamate + 2 ADP + 2 phosphate + 2 H(+). The protein operates within cofactor biosynthesis; adenosylcobalamin biosynthesis; cob(II)yrinate a,c-diamide from sirohydrochlorin (anaerobic route): step 10/10. Catalyzes the ATP-dependent amidation of the two carboxylate groups at positions a and c of cobyrinate, using either L-glutamine or ammonia as the nitrogen source. This is Cobyrinate a,c-diamide synthase from Sulfurisphaera tokodaii (strain DSM 16993 / JCM 10545 / NBRC 100140 / 7) (Sulfolobus tokodaii).